A 357-amino-acid chain; its full sequence is Membrane-bound lytic murein transglycosylase C (357 aa).

The N-terminal stretch at 1–15 (MKKYLLLALLPFLYA) is a signal peptide. Residue Cys16 is the site of N-palmitoyl cysteine attachment. The S-diacylglycerol cysteine moiety is linked to residue Cys16.

Belongs to the transglycosylase Slt family.

The protein localises to the cell outer membrane. The catalysed reaction is Exolytic cleavage of the (1-&gt;4)-beta-glycosidic linkage between N-acetylmuramic acid (MurNAc) and N-acetylglucosamine (GlcNAc) residues in peptidoglycan, from either the reducing or the non-reducing ends of the peptidoglycan chains, with concomitant formation of a 1,6-anhydrobond in the MurNAc residue.. Murein-degrading enzyme. May play a role in recycling of muropeptides during cell elongation and/or cell division. The protein is Membrane-bound lytic murein transglycosylase C of Haemophilus influenzae (strain ATCC 51907 / DSM 11121 / KW20 / Rd).